The following is a 351-amino-acid chain: Hydroxymethylglutaryl-CoA synthase (351 aa).

Residue D28 coordinates (3S)-3-hydroxy-3-methylglutaryl-CoA. The active-site Proton donor/acceptor is E80. The (3S)-3-hydroxy-3-methylglutaryl-CoA site is built by C112 and T153. Residue C112 is the Acyl-thioester intermediate of the active site. R199 contacts CoA. (3S)-3-hydroxy-3-methylglutaryl-CoA contacts are provided by T201 and H234. H234 (proton donor/acceptor) is an active-site residue. K239 provides a ligand contact to CoA. (3S)-3-hydroxy-3-methylglutaryl-CoA contacts are provided by R243, N266, and S296.

This sequence belongs to the thiolase-like superfamily. Archaeal HMG-CoA synthase family. As to quaternary structure, interacts with acetoacetyl-CoA thiolase that catalyzes the precedent step in the pathway and with a DUF35 protein. The acetoacetyl-CoA thiolase/HMG-CoA synthase complex channels the intermediate via a fused CoA-binding site, which allows for efficient coupling of the endergonic thiolase reaction with the exergonic HMGCS reaction.

It carries out the reaction acetoacetyl-CoA + acetyl-CoA + H2O = (3S)-3-hydroxy-3-methylglutaryl-CoA + CoA + H(+). It participates in metabolic intermediate biosynthesis; (R)-mevalonate biosynthesis; (R)-mevalonate from acetyl-CoA: step 2/3. In terms of biological role, catalyzes the condensation of acetyl-CoA with acetoacetyl-CoA to form 3-hydroxy-3-methylglutaryl-CoA (HMG-CoA). Functions in the mevalonate (MVA) pathway leading to isopentenyl diphosphate (IPP), a key precursor for the biosynthesis of isoprenoid compounds that are building blocks of archaeal membrane lipids. The polypeptide is Hydroxymethylglutaryl-CoA synthase (Picrophilus torridus (strain ATCC 700027 / DSM 9790 / JCM 10055 / NBRC 100828 / KAW 2/3)).